The sequence spans 156 residues: Small ribosomal subunit protein uS7 (156 aa).

Belongs to the universal ribosomal protein uS7 family. As to quaternary structure, part of the 30S ribosomal subunit. Contacts proteins S9 and S11.

Functionally, one of the primary rRNA binding proteins, it binds directly to 16S rRNA where it nucleates assembly of the head domain of the 30S subunit. Is located at the subunit interface close to the decoding center, probably blocks exit of the E-site tRNA. The sequence is that of Small ribosomal subunit protein uS7 from Yersinia enterocolitica serotype O:8 / biotype 1B (strain NCTC 13174 / 8081).